Consider the following 141-residue polypeptide: Cystatin (141 aa).

The N-terminal stretch at 1–26 (MVHSQLPVAAPLRLLCALLLLPSATM) is a signal peptide. Positions 29–129 (GGLSPRSVTD…CHFQVWSRPW (101 aa)) constitute a Cystatin domain. Positions 73-77 (QVVAG) match the Secondary area of contact motif. Intrachain disulfides connect C91-C107 and C120-C140.

This sequence belongs to the cystatin family. As to expression, expressed at a low level by the venom gland (at protein level).

The protein localises to the secreted. Its function is as follows. Inhibits various C1 cysteine proteases including cathepsin L, papain and cathepsin B. This protein has no toxic activity and its function in the venom is unknown. It may play a role as a housekeeping or regulatory protein. This Pseudonaja textilis (Eastern brown snake) protein is Cystatin.